Here is a 205-residue protein sequence, read N- to C-terminus: Probable DNA-binding protein (205 aa).

The tract at residues 140-168 (GEGDGAPRPACPDFSTRGAETGNQGVQPG) is disordered.

The sequence is that of Probable DNA-binding protein from Homo sapiens (Human).